Reading from the N-terminus, the 215-residue chain is Urease accessory protein UreE (215 aa).

A disordered region spans residues 134–215; sequence FDPEGGAYAP…HGHSHKHDHK (82 aa). Positions 164–206 are enriched in basic and acidic residues; sequence GHHDHADHEHDHKHDHGKHDHAGHDHAHDHHVHDEHCGHDHGH.

The protein belongs to the UreE family.

It localises to the cytoplasm. Its function is as follows. Involved in urease metallocenter assembly. Binds nickel. Probably functions as a nickel donor during metallocenter assembly. The protein is Urease accessory protein UreE of Rhodopseudomonas palustris (strain HaA2).